The sequence spans 265 residues: Undecaprenyl-diphosphatase (265 aa).

8 helical membrane-spanning segments follow: residues Met1–Ile21, Gln39–Phe59, Ala84–Leu104, Ala114–Leu134, Leu144–Thr164, Phe187–Val207, Gly218–Leu238, and Val244–Leu264.

It belongs to the UppP family.

It localises to the cell inner membrane. The enzyme catalyses di-trans,octa-cis-undecaprenyl diphosphate + H2O = di-trans,octa-cis-undecaprenyl phosphate + phosphate + H(+). Its function is as follows. Catalyzes the dephosphorylation of undecaprenyl diphosphate (UPP). Confers resistance to bacitracin. This chain is Undecaprenyl-diphosphatase, found in Marinobacter nauticus (strain ATCC 700491 / DSM 11845 / VT8) (Marinobacter aquaeolei).